The chain runs to 89 residues: Small ribosomal subunit protein uS15 (89 aa).

Belongs to the universal ribosomal protein uS15 family. Part of the 30S ribosomal subunit. Forms a bridge to the 50S subunit in the 70S ribosome, contacting the 23S rRNA.

In terms of biological role, one of the primary rRNA binding proteins, it binds directly to 16S rRNA where it helps nucleate assembly of the platform of the 30S subunit by binding and bridging several RNA helices of the 16S rRNA. Functionally, forms an intersubunit bridge (bridge B4) with the 23S rRNA of the 50S subunit in the ribosome. This chain is Small ribosomal subunit protein uS15, found in Elusimicrobium minutum (strain Pei191).